We begin with the raw amino-acid sequence, 324 residues long: O-ureido-L-serine synthase (324 aa).

Lys-43 is modified (N6-(pyridoxal phosphate)lysine). Pyridoxal 5'-phosphate is bound by residues Asn-73, 177–181, and Ser-265; that span reads GTTGT.

This sequence belongs to the cysteine synthase/cystathionine beta-synthase family. Homotetramer. Pyridoxal 5'-phosphate is required as a cofactor.

The enzyme catalyses hydroxyurea + O-acetyl-L-serine = O-ureido-L-serine + acetate + H(+). It carries out the reaction O-acetyl-L-serine + hydrogen sulfide = L-cysteine + acetate. In terms of biological role, involved in the biosynthesis of the antibiotic D-cycloserine (DCS), a cyclic structural analog of D-alanine, used as an antitubercular agent. Catalyzes the addition of hydroxyurea on O-acetyl-L-serine (OAS) to yield O-ureido-L-serine. It prefers sulfide as the second substrate, followed by hydroxyurea, L-homocysteine, and thiosulfate. In Streptomyces lavendulae, this protein is O-ureido-L-serine synthase.